We begin with the raw amino-acid sequence, 186 residues long: Negative modulator of initiation of replication (186 aa).

Positions 93–94 (AV) are interaction with DNA.

This sequence belongs to the SeqA family. As to quaternary structure, homodimer. Polymerizes to form helical filaments.

The protein resides in the cytoplasm. Functionally, negative regulator of replication initiation, which contributes to regulation of DNA replication and ensures that replication initiation occurs exactly once per chromosome per cell cycle. Binds to pairs of hemimethylated GATC sequences in the oriC region, thus preventing assembly of replication proteins and re-initiation at newly replicated origins. Repression is relieved when the region becomes fully methylated. In Shewanella halifaxensis (strain HAW-EB4), this protein is Negative modulator of initiation of replication.